The chain runs to 499 residues: Low-affinity inorganic phosphate transporter PitB (499 aa).

The next 10 helical transmembrane spans lie at 5-25 (FVGL…FVLF), 52-72 (LAVV…GLSV), 94-114 (LAMV…TWFF), 124-144 (LIGA…SSVM), 155-175 (IFSS…GLIF), 207-227 (PFWT…SHGA), 233-253 (GIGL…VVNM), 382-402 (APVW…MIGW), 430-450 (AAVS…THVL), and 473-493 (ILMA…GLYW).

The protein belongs to the inorganic phosphate transporter (PiT) (TC 2.A.20) family. Pit subfamily.

The protein localises to the cell inner membrane. It carries out the reaction phosphate(in) + H(+)(in) = phosphate(out) + H(+)(out). In terms of biological role, low-affinity inorganic phosphate transporter. This is Low-affinity inorganic phosphate transporter PitB from Escherichia coli (strain K12).